The sequence spans 144 residues: Large ribosomal subunit protein uL15 (144 aa).

Positions 1-51 are disordered; sequence MRLNTIKPGAGSKSAGKRVGRGIGSGLGKTCGRGHKGQKSRAGGFHKVGFE. The span at 21–31 shows a compositional bias: gly residues; it reads RGIGSGLGKTC.

The protein belongs to the universal ribosomal protein uL15 family. Part of the 50S ribosomal subunit.

Binds to the 23S rRNA. In Azoarcus sp. (strain BH72), this protein is Large ribosomal subunit protein uL15.